Reading from the N-terminus, the 1281-residue chain is Dynactin subunit 1 (1281 aa).

The segment at 1–26 (MAQSRRHMSSRTPSGSRMSTEASARP) is disordered. Polar residues predominate over residues 10 to 22 (SRTPSGSRMSTEA). The region spanning 48–90 (GATLFATGKWVGVILDEAKGKNDGTVQGRKYFTCDEGHGIFVR) is the CAP-Gly domain. Positions 100 to 221 (GADTTSPETP…SPSKEEEGLR (122 aa)) are disordered. A compositionally biased stretch (polar residues) spans 102-114 (DTTSPETPDSSAS). Phosphothreonine is present on residues T108, T145, T146, and T147. The segment covering 129–152 (SKLRGLKPKKAPTARKTTTRRPKP) has biased composition (basic residues). Residues 161–205 (AGPSSSLGPSGSASAGELSSSEPSTPAQTPLAAPIIPTPALTSPG) show a composition bias toward low complexity. S179 carries the phosphoserine; by PLK1 modification. Position 212 is a phosphoserine; by CDK1 (S212). Coiled-coil stretches lie at residues 214–547 (SKEE…RQQQ), 943–1049 (LKLE…EGLR), and 1185–1214 (SAQL…KETV). Residues 911-1281 (EYDAERPPSK…LHQLHSRLIS (371 aa)) form an interaction with HPS6 region.

The protein belongs to the dynactin 150 kDa subunit family. Monomer and homodimer. Subunit of dynactin, a multiprotein complex part of a tripartite complex with dynein and a adapter, such as BICDL1, BICD2 or HOOK3. The dynactin complex is built around ACTR1A/ACTB filament and consists of an actin-related filament composed of a shoulder domain, a pointed end and a barbed end. Its length is defined by its flexible shoulder domain. The soulder is composed of 2 DCTN1 subunits, 4 DCTN2 and 2 DCTN3. DCTN1/p150(glued) binds directly to microtubules and to cytoplasmic dynein. The 4 DCNT2 (via N-terminus) bind the ACTR1A filament and act as molecular rulers to determine the length. The pointed end is important for binding dynein-dynactin cargo adapters. Consists of 4 subunits: ACTR10, DCNT4, DCTN5 and DCTN6. The barbed end is composed of a CAPZA1:CAPZB heterodimers, which binds ACTR1A/ACTB filament and dynactin and stabilizes dynactin. Interacts with the C-terminus of MAPRE1, MAPRE2 and MAPRE3. Interacts with FBXL5. Interacts with ECPAS. Interacts with CLIP1. Interacts with CLN3 and DYNAP. Interacts with MISP; this interaction regulates its distribution at the cell cortex. Interacts with CEP131. Interacts with CEP126. Interacts with dynein intermediate chain and dynein heavy chain. Interacts with PLK1 (via POLO-box domain). Interacts with TBCB and PARD6A. Binds preferentially to tyrosinated microtubules than to detyrosinated microtubules. Interacts with KIF3A. Interacts with HPS6. Interacts with SNX6. Interacts with BICD2. Interacts with DST (isoform 1). Identified in a complex with MREG and RILP. Interacts with BCCIP. Interacts with DCDC1. Interacts with AKNA. Interacts with DYNC1I2. Interacts with RUFY3 and RUFY4. Ubiquitinated by a SCF complex containing FBXL5, leading to its degradation by the proteasome. In terms of processing, phosphorylation by SLK at Thr-145, Thr-146 and Thr-147 targets DCTN1 to the centrosome. It is uncertain if SLK phosphorylates all three threonines or one or two of them. PLK1-mediated phosphorylation at Ser-179 is essential for its localization in the nuclear envelope and promotes its dissociation from microtubules during early mitosis and positively regulates nuclear envelope breakdown during prophase.

It is found in the cytoplasm. The protein localises to the cytoskeleton. It localises to the microtubule organizing center. The protein resides in the centrosome. Its subcellular location is the centriole. It is found in the spindle. The protein localises to the nucleus envelope. It localises to the cell cortex. Part of the dynactin complex that activates the molecular motor dynein for ultra-processive transport along microtubules. Plays a key role in dynein-mediated retrograde transport of vesicles and organelles along microtubules by recruiting and tethering dynein to microtubules. Binds to both dynein and microtubules providing a link between specific cargos, microtubules and dynein. Essential for targeting dynein to microtubule plus ends, recruiting dynein to membranous cargos and enhancing dynein processivity (the ability to move along a microtubule for a long distance without falling off the track). Can also act as a brake to slow the dynein motor during motility along the microtubule. Can regulate microtubule stability by promoting microtubule formation, nucleation and polymerization and by inhibiting microtubule catastrophe in neurons. Inhibits microtubule catastrophe by binding both to microtubules and to tubulin, leading to enhanced microtubule stability along the axon. Plays a role in metaphase spindle orientation. Plays a role in centriole cohesion and subdistal appendage organization and function. Its recruitment to the centriole in a KIF3A-dependent manner is essential for the maintenance of centriole cohesion and the formation of subdistal appendage. Also required for microtubule anchoring at the mother centriole. Plays a role in primary cilia formation. In Mus musculus (Mouse), this protein is Dynactin subunit 1 (Dctn1).